Consider the following 229-residue polypeptide: Large ribosomal subunit protein uL1 (229 aa).

The protein belongs to the universal ribosomal protein uL1 family. Part of the 50S ribosomal subunit.

Binds directly to 23S rRNA. The L1 stalk is quite mobile in the ribosome, and is involved in E site tRNA release. Functionally, protein L1 is also a translational repressor protein, it controls the translation of the L11 operon by binding to its mRNA. This Actinobacillus pleuropneumoniae serotype 3 (strain JL03) protein is Large ribosomal subunit protein uL1.